Here is a 237-residue protein sequence, read N- to C-terminus: Ribonuclease PH (237 aa).

Phosphate contacts are provided by residues arginine 86 and 124–126 (GTR).

It belongs to the RNase PH family. As to quaternary structure, homohexameric ring arranged as a trimer of dimers.

The catalysed reaction is tRNA(n+1) + phosphate = tRNA(n) + a ribonucleoside 5'-diphosphate. Functionally, phosphorolytic 3'-5' exoribonuclease that plays an important role in tRNA 3'-end maturation. Removes nucleotide residues following the 3'-CCA terminus of tRNAs; can also add nucleotides to the ends of RNA molecules by using nucleoside diphosphates as substrates, but this may not be physiologically important. Probably plays a role in initiation of 16S rRNA degradation (leading to ribosome degradation) during starvation. This Methylorubrum extorquens (strain CM4 / NCIMB 13688) (Methylobacterium extorquens) protein is Ribonuclease PH.